Reading from the N-terminus, the 170-residue chain is Ecotin (170 aa).

An N-terminal signal peptide occupies residues 1-21 (MNKASVVFSGLLMAVSASAIA). Cysteine 78 and cysteine 115 are disulfide-bonded.

It belongs to the protease inhibitor I11 (ecotin) family. Homodimer.

The protein resides in the periplasm. In terms of biological role, general inhibitor of pancreatic serine proteases: inhibits chymotrypsin, trypsin, elastases, factor X, kallikrein as well as a variety of other proteases. The sequence is that of Ecotin from Serratia proteamaculans (strain 568).